Reading from the N-terminus, the 1081-residue chain is Probable cellulose synthase A catalytic subunit 8 [UDP-forming] (1081 aa).

At 1–277 (MDGDADAVKS…PSSRINPYRM (277 aa)) the chain is on the cytoplasmic side. 8 residues coordinate Zn(2+): C19, C22, C38, C41, C46, C49, C61, and C64. An RING-type; degenerate zinc finger spans residues 19–65 (CQICGDGVGTTAEGDVFAACDVCGFPVCRPCYEYERKDGTQACPQCK). Residues 72-148 (KGSPAIRGEE…YDSGEIPRGY (77 aa)) form a disordered region. Acidic residues predominate over residues 81-91 (EGEDTDADDVS). Residues 103 to 112 (QKQKIADRMR) are compositionally biased toward basic and acidic residues. A helical membrane pass occupies residues 278–298 (VIVLRLVVLSIFLHYRITNPV). Topologically, residues 299–300 (RN) are extracellular. Residues 301–321 (AYPLWLLSVICEIWFALSWIL) form a helical membrane-spanning segment. The Cytoplasmic segment spans residues 322-864 (DQFPKWFPIN…INTTIYPLTS (543 aa)). UDP-alpha-D-glucose is bound by residues S360, K366, E367, and D396. The active site involves D396. The stretch at 450-477 (VKDRRAMKREYEEFKVRINGLVAKAQKV) forms a coiled coil. A UDP-alpha-D-glucose-binding site is contributed by K537. K538 and D562 together coordinate Mn(2+). Residues 660–684 (SLCGGRKKASKSKKKSSDKKKSNKH) are disordered. Positions 664 to 682 (GRKKASKSKKKSSDKKKSN) are enriched in basic residues. D781 is a catalytic residue. A helical membrane pass occupies residues 865-885 (IPLLIYCVLPAICLLTGKFII). Over 886 to 890 (PEISN) the chain is Extracellular. A helical membrane pass occupies residues 891–911 (FASIWFISLFISIFATGILEM). Over 912-926 (RWSGVGIDEWWRNEQ) the chain is Cytoplasmic. A helical membrane pass occupies residues 927-947 (FWVIGGISAHLFAVFQGLLKV). The Extracellular portion of the chain corresponds to 948-977 (LAGIDTNFTVTSKASDEDGDFAELYMFKWT). A glycan (N-linked (GlcNAc...) asparagine) is linked at N954. Residues 978 to 998 (TLLIPPTTILIINLVGVVAGI) traverse the membrane as a helical segment. The Cytoplasmic segment spans residues 999–1009 (SYAINSGYQSW). The chain crosses the membrane as a helical span at residues 1010-1030 (GPLFGKLFFAFWVIVHLYPFL). Over 1031-1039 (KGLMGRQNR) the chain is Extracellular. The chain crosses the membrane as a helical span at residues 1040 to 1060 (TPTIVVVWAILLASIFSLLWV). At 1061–1081 (RIDPFTTRVTGPDTQTCGINC) the chain is on the cytoplasmic side.

This sequence belongs to the glycosyltransferase 2 family. Plant cellulose synthase subfamily. It depends on Mn(2+) as a cofactor. The cofactor is Zn(2+).

Its subcellular location is the cell membrane. The enzyme catalyses [(1-&gt;4)-beta-D-glucosyl](n) + UDP-alpha-D-glucose = [(1-&gt;4)-beta-D-glucosyl](n+1) + UDP + H(+). Its pathway is glycan metabolism; plant cellulose biosynthesis. Functionally, probable catalytic subunit of cellulose synthase terminal complexes ('rosettes'), required for beta-1,4-glucan microfibril crystallization, a major mechanism of the cell wall formation. This chain is Probable cellulose synthase A catalytic subunit 8 [UDP-forming] (CESA8), found in Oryza sativa subsp. japonica (Rice).